The primary structure comprises 58 residues: Small ribosomal subunit protein bS21 (58 aa).

Over residues 32–42 (VRKREHYEKPS) the composition is skewed to basic and acidic residues. Residues 32 to 58 (VRKREHYEKPSVKKKKKSEAARKRKFK) form a disordered region. The span at 43–58 (VKKKKKSEAARKRKFK) shows a compositional bias: basic residues.

Belongs to the bacterial ribosomal protein bS21 family.

The chain is Small ribosomal subunit protein bS21 from Clostridium botulinum (strain Okra / Type B1).